Reading from the N-terminus, the 167-residue chain is METSLRYATNSRSLKIHAKEKFPVNSKTRLQLHGELDTGAGVPSYFCAMIRYFFHEASTNLGVGLHYDKREKLRCLVRGKKKFPVITDEVVTFNIKGRCDFDQDLVQRNAKGAAEFDWNIWKFQKDQDLRLRIGYEMFEKVPYMQIRENNWTFNTNLKGKWNVRYDL.

The Cytoplasmic portion of the chain corresponds to 1 to 21 (METSLRYATNSRSLKIHAKEK). A beta stranded membrane pass occupies residues 22-31 (FPVNSKTRLQ). The Chloroplast intermembrane segment spans residues 32-55 (LHGELDTGAGVPSYFCAMIRYFFH). The chain crosses the membrane as a beta stranded span at residues 56–65 (EASTNLGVGL). Topologically, residues 66–71 (HYDKRE) are cytoplasmic. Residues 72 to 81 (KLRCLVRGKK) form a beta stranded membrane-spanning segment. Residues 82–87 (KFPVIT) are Chloroplast intermembrane-facing. The chain crosses the membrane as a beta stranded span at residues 88–97 (DEVVTFNIKG). The Cytoplasmic segment spans residues 98-110 (RCDFDQDLVQRNA). The beta stranded transmembrane segment at 111–120 (KGAAEFDWNI) threads the bilayer. At 121-127 (WKFQKDQ) the chain is on the chloroplast intermembrane side. Residues 128 to 137 (DLRLRIGYEM) traverse the membrane as a beta stranded segment. Topologically, residues 138–142 (FEKVP) are cytoplasmic. Residues 143 to 152 (YMQIRENNWT) form a beta stranded membrane-spanning segment. Over 153-158 (FNTNLK) the chain is Chloroplast intermembrane. The beta stranded transmembrane segment at 159–167 (GKWNVRYDL) threads the bilayer.

Belongs to the plastid outer envelope porin OEP21 (TC 1.B.29) family.

The protein resides in the plastid. The protein localises to the etioplast membrane. Its subcellular location is the chloroplast outer membrane. Functionally, voltage-dependent rectifying anion channel that facilitates the translocation between chloroplast and cytoplasm of phosphorylated carbohydrates such as triosephosphate, 3-phosphoglycerate and inorganic phosphate (Pi) depending of ATP to triosephosphate ratio in the plastidial intermembrane space; in high triosephosphate/ATP conditions (e.g. photosynthesis), export of triosphosphate from chloroplast (outward rectifying channels), but in high ATP/triosephosphate conditions (e.g. dark phase), import of phosphosolutes (inward rectifying channels). This Arabidopsis thaliana (Mouse-ear cress) protein is Outer envelope pore protein 21A, chloroplastic (OEP21A).